A 260-amino-acid chain; its full sequence is Na(+)-translocating NADH-quinone reductase subunit C (260 aa).

A helical transmembrane segment spans residues 12 to 32 (LLVIILLSLACSIIVAGSAVL). Threonine 226 is modified (FMN phosphoryl threonine).

The protein belongs to the NqrC family. As to quaternary structure, composed of six subunits; NqrA, NqrB, NqrC, NqrD, NqrE and NqrF. FMN serves as cofactor.

It is found in the cell inner membrane. The enzyme catalyses a ubiquinone + n Na(+)(in) + NADH + H(+) = a ubiquinol + n Na(+)(out) + NAD(+). NQR complex catalyzes the reduction of ubiquinone-1 to ubiquinol by two successive reactions, coupled with the transport of Na(+) ions from the cytoplasm to the periplasm. NqrA to NqrE are probably involved in the second step, the conversion of ubisemiquinone to ubiquinol. The protein is Na(+)-translocating NADH-quinone reductase subunit C of Pasteurella multocida (strain Pm70).